A 484-amino-acid chain; its full sequence is tRNA sulfurtransferase (484 aa).

The 105-residue stretch at 61–165 folds into the THUMP domain; it reads PLILDLLKRT…GDKMLLVEAR (105 aa). Residues 183-184, Lys-265, Gly-287, and Gln-296 each bind ATP; that span reads LI. Cysteines 344 and 456 form a disulfide. In terms of domain architecture, Rhodanese spans 404 to 483; it reads LTEKDIILDI…YQNVKVFNLP (80 aa). The active-site Cysteine persulfide intermediate is Cys-456.

This sequence belongs to the ThiI family.

The protein resides in the cytoplasm. The enzyme catalyses [ThiI sulfur-carrier protein]-S-sulfanyl-L-cysteine + a uridine in tRNA + 2 reduced [2Fe-2S]-[ferredoxin] + ATP + H(+) = [ThiI sulfur-carrier protein]-L-cysteine + a 4-thiouridine in tRNA + 2 oxidized [2Fe-2S]-[ferredoxin] + AMP + diphosphate. It carries out the reaction [ThiS sulfur-carrier protein]-C-terminal Gly-Gly-AMP + S-sulfanyl-L-cysteinyl-[cysteine desulfurase] + AH2 = [ThiS sulfur-carrier protein]-C-terminal-Gly-aminoethanethioate + L-cysteinyl-[cysteine desulfurase] + A + AMP + 2 H(+). It functions in the pathway cofactor biosynthesis; thiamine diphosphate biosynthesis. Catalyzes the ATP-dependent transfer of a sulfur to tRNA to produce 4-thiouridine in position 8 of tRNAs, which functions as a near-UV photosensor. Also catalyzes the transfer of sulfur to the sulfur carrier protein ThiS, forming ThiS-thiocarboxylate. This is a step in the synthesis of thiazole, in the thiamine biosynthesis pathway. The sulfur is donated as persulfide by IscS. The sequence is that of tRNA sulfurtransferase from Haemophilus ducreyi (strain 35000HP / ATCC 700724).